Consider the following 375-residue polypeptide: Putative type I specificity subunit S.MpnORF638P (375 aa).

This sequence belongs to the type-I restriction system S methylase family. The methyltransferase is composed of M and S polypeptides.

In terms of biological role, the specificity (S) subunit of a type I methyltransferase (MTase); this subunit dictates DNA sequence specificity. The single R subunit has multiple frameshifts and is probably not expressed. This is Putative type I specificity subunit S.MpnORF638P from Mycoplasma pneumoniae (strain ATCC 29342 / M129 / Subtype 1) (Mycoplasmoides pneumoniae).